We begin with the raw amino-acid sequence, 453 residues long: tRNA (guanine-N(7)-)-methyltransferase non-catalytic subunit TRM82 (453 aa).

The disordered stretch occupies residues 69–99 (ENEEKGIKKSKTNEGNTIEKKHDAKIPVPGP). WD repeat units lie at residues 103–143 (PIYS…NDNC) and 244–286 (GHKE…DEFD).

This sequence belongs to the WD repeat TRM82 family. As to quaternary structure, forms a heterodimer with the catalytic subunit TRM8.

It localises to the nucleus. It functions in the pathway tRNA modification; N(7)-methylguanine-tRNA biosynthesis. Required for the formation of N(7)-methylguanine at position 46 (m7G46) in tRNA. In the complex, it is required to stabilize and induce conformational changes of the catalytic subunit. The chain is tRNA (guanine-N(7)-)-methyltransferase non-catalytic subunit TRM82 from Vanderwaltozyma polyspora (strain ATCC 22028 / DSM 70294 / BCRC 21397 / CBS 2163 / NBRC 10782 / NRRL Y-8283 / UCD 57-17) (Kluyveromyces polysporus).